The primary structure comprises 104 residues: COX assembly mitochondrial protein 1 (104 aa).

A CHCH domain is found at 10 to 52 (QKQCADLIRALEECHKSFGKFFGECNTIKYELKACLTKDRNDK). 2 consecutive short sequence motifs (cx9C motif) follow at residues 13 to 23 (CADLIRALEEC) and 34 to 44 (CNTIKYELKAC). Disulfide bonds link cysteine 13–cysteine 44 and cysteine 23–cysteine 34.

Belongs to the CMC family.

Its subcellular location is the mitochondrion inner membrane. Required for mitochondrial cytochrome c oxidase (COX) assembly and respiration. This Schizosaccharomyces pombe (strain 972 / ATCC 24843) (Fission yeast) protein is COX assembly mitochondrial protein 1 (cmc1).